A 153-amino-acid chain; its full sequence is 3-hydroxyacyl-[acyl-carrier-protein] dehydratase FabZ (153 aa).

H57 is an active-site residue.

Belongs to the thioester dehydratase family. FabZ subfamily.

The protein localises to the cytoplasm. It catalyses the reaction a (3R)-hydroxyacyl-[ACP] = a (2E)-enoyl-[ACP] + H2O. Involved in unsaturated fatty acids biosynthesis. Catalyzes the dehydration of short chain beta-hydroxyacyl-ACPs and long chain saturated and unsaturated beta-hydroxyacyl-ACPs. This chain is 3-hydroxyacyl-[acyl-carrier-protein] dehydratase FabZ, found in Xanthomonas campestris pv. campestris (strain 8004).